Consider the following 142-residue polypeptide: MVLSPADKTNVKAAWGKVGAHAGEYGAEALERMFLSFPTTKTYFPHFDLSHGSAQVKGHGKKVADALTNAVAHVDDMPNALSALSDLHAHKLRVDPVNFKLLSHCLLVTLAAHLPAEFTPAVHASLDKFLASVSTVLTSKYR.

In terms of domain architecture, Globin spans Val2–Arg142. Ser4 is modified (phosphoserine). Lys8 carries the post-translational modification N6-succinyllysine. Thr9 carries the post-translational modification Phosphothreonine. At Lys12 the chain carries N6-succinyllysine. Position 17 is an N6-acetyllysine; alternate (Lys17). Lys17 carries the post-translational modification N6-succinyllysine; alternate. Tyr25 is modified (phosphotyrosine). Phosphoserine is present on Ser36. Lys41 bears the N6-succinyllysine mark. Ser50 carries the post-translational modification Phosphoserine. Residue His59 participates in O2 binding. His88 provides a ligand contact to heme b. Ser103 carries the phosphoserine modification. A Phosphothreonine modification is found at Thr109. A phosphoserine mark is found at Ser125 and Ser132. A phosphothreonine mark is found at Thr135 and Thr138. Ser139 is modified (phosphoserine).

Belongs to the globin family. As to quaternary structure, heterotetramer of two alpha chains and two beta chains in adult hemoglobin A (HbA); two alpha chains and two delta chains in adult hemoglobin A2 (HbA2); two alpha chains and two epsilon chains in early embryonic hemoglobin Gower-2; two alpha chains and two gamma chains in fetal hemoglobin F (HbF). Red blood cells.

Its function is as follows. Involved in oxygen transport from the lung to the various peripheral tissues. Functionally, hemopressin acts as an antagonist peptide of the cannabinoid receptor CNR1. Hemopressin-binding efficiently blocks cannabinoid receptor CNR1 and subsequent signaling. The polypeptide is Hemoglobin subunit alpha (HBA1) (Pan paniscus (Pygmy chimpanzee)).